The chain runs to 224 residues: MSESRIDFRKAEFLISAPDIAHLNEYLPGDVGVEIAFAGRSNAGKSSALNLLTEQKIARTSKTPGRTQLINVFKLDKHRRLVDLPGYGFAQVPLALKKKWQQALGEYLLKRECLSGVVVLMDIRHPLKDLDMQMIEWAVESDIPVLALLTKADKLGQSARMKMVNEVRKKLSNFDDAVKVEAFSSLKGIGKGKVLGILDQWCKPEWLQEQLTAESIEAQIESGK.

Residues 31–204 (VGVEIAFAGR…LGILDQWCKP (174 aa)) enclose the EngB-type G domain. GTP-binding positions include 39 to 46 (GRSNAGKS), 65 to 69 (GRTQL), 83 to 86 (DLPG), 150 to 153 (TKAD), and 183 to 185 (FSS). Mg(2+)-binding residues include Ser46 and Thr67.

It belongs to the TRAFAC class TrmE-Era-EngA-EngB-Septin-like GTPase superfamily. EngB GTPase family. Mg(2+) serves as cofactor.

Necessary for normal cell division and for the maintenance of normal septation. This Shewanella piezotolerans (strain WP3 / JCM 13877) protein is Probable GTP-binding protein EngB.